The primary structure comprises 130 residues: Small ribosomal subunit protein uS9 (130 aa).

It belongs to the universal ribosomal protein uS9 family.

The sequence is that of Small ribosomal subunit protein uS9 from Blochmanniella floridana.